We begin with the raw amino-acid sequence, 309 residues long: MSQAIREATHAGSWYLDDTELLTKQLKSFIKNPTPETGKRFVISPHAGYMYSGKVASQGFQQLDFSKIQRVFVFGPSHHIFTRKCLVSRASICSTPLGDLKVDEDLCQKLVASDNSFDSMTLDVDESEHSLEMQFPLLAFHLLKQGCLGKVKIVPIMIGALTSTTMMAAAKFLSQYIKDESNSFVISSDFCHWGRRFGYTLYLNDTNQLEDAVLKYKRRGGPTSPKIYESISNLDHIGMKIIETKSSDDFSEYLKTTQNTICGRYPIELIMKSMECANFSERFKFISYAQSSHVELVTDSSVSYATATA.

It belongs to the MEMO1 family.

This Schizosaccharomyces pombe (strain 972 / ATCC 24843) (Fission yeast) protein is MEMO1 family protein C4H3.04c.